The chain runs to 339 residues: Glycerol-3-phosphate dehydrogenase [NAD(P)+] (339 aa).

The NADPH site is built by Ser-15, Tyr-16, His-36, and Lys-110. Sn-glycerol 3-phosphate is bound by residues Lys-110, Gly-139, and Thr-141. NADPH is bound at residue Ala-143. Residues Lys-195, Asp-248, Ser-258, Arg-259, and Asn-260 each coordinate sn-glycerol 3-phosphate. Residue Lys-195 is the Proton acceptor of the active site. Position 259 (Arg-259) interacts with NADPH. Residues Val-283 and Glu-285 each contribute to the NADPH site.

The protein belongs to the NAD-dependent glycerol-3-phosphate dehydrogenase family.

Its subcellular location is the cytoplasm. The enzyme catalyses sn-glycerol 3-phosphate + NAD(+) = dihydroxyacetone phosphate + NADH + H(+). It carries out the reaction sn-glycerol 3-phosphate + NADP(+) = dihydroxyacetone phosphate + NADPH + H(+). It functions in the pathway membrane lipid metabolism; glycerophospholipid metabolism. In terms of biological role, catalyzes the reduction of the glycolytic intermediate dihydroxyacetone phosphate (DHAP) to sn-glycerol 3-phosphate (G3P), the key precursor for phospholipid synthesis. This chain is Glycerol-3-phosphate dehydrogenase [NAD(P)+], found in Shigella boydii serotype 18 (strain CDC 3083-94 / BS512).